The following is a 522-amino-acid chain: N-acetylgalactosamine-6-sulfatase (522 aa).

Positions 1-25 (MAPVAAATGWRLLLVLSAAGLGAAG) are cleaved as a signal peptide. Residues 27–379 (PQPPNILLLL…PAMLGGQLTD (353 aa)) are catalytic domain. Positions 38, 39, and 78 each coordinate Ca(2+). The active-site Nucleophile is Cys78. Residue Cys78 is modified to 3-oxoalanine (Cys). His141 is an active-site residue. Asn203 carries N-linked (GlcNAc...) asparagine glycosylation. Residues Asp288 and Asn289 each coordinate Ca(2+). Cys308 and Cys419 are joined by a disulfide. The N-linked (GlcNAc...) asparagine glycan is linked to Asn423. Cystine bridges form between Cys489/Cys518 and Cys501/Cys507.

This sequence belongs to the sulfatase family. As to quaternary structure, homodimer. It depends on Ca(2+) as a cofactor. In terms of processing, the conversion to 3-oxoalanine (also known as C-formylglycine, FGly), of a serine or cysteine residue in prokaryotes and of a cysteine residue in eukaryotes, is critical for catalytic activity.

Its subcellular location is the lysosome. The catalysed reaction is Hydrolysis of the 6-sulfate groups of the N-acetyl-D-galactosamine 6-sulfate units of chondroitin sulfate and of the D-galactose 6-sulfate units of keratan sulfate.. This is N-acetylgalactosamine-6-sulfatase (GALNS) from Canis lupus familiaris (Dog).